Here is a 390-residue protein sequence, read N- to C-terminus: Methylthioribose-1-phosphate isomerase (390 aa).

Asp258 acts as the Proton donor in catalysis.

The protein belongs to the eIF-2B alpha/beta/delta subunits family. MtnA subfamily.

It localises to the cytoplasm. The protein resides in the nucleus. It carries out the reaction 5-(methylsulfanyl)-alpha-D-ribose 1-phosphate = 5-(methylsulfanyl)-D-ribulose 1-phosphate. It participates in amino-acid biosynthesis; L-methionine biosynthesis via salvage pathway; L-methionine from S-methyl-5-thio-alpha-D-ribose 1-phosphate: step 1/6. Functionally, catalyzes the interconversion of methylthioribose-1-phosphate (MTR-1-P) into methylthioribulose-1-phosphate (MTRu-1-P). This chain is Methylthioribose-1-phosphate isomerase, found in Coccidioides posadasii (strain C735) (Valley fever fungus).